The following is a 516-amino-acid chain: Delta(24)-sterol reductase (516 aa).

A signal peptide spans 1 to 22; it reads MEPAVSLAVCALLFLLWVRVKG. The Lumenal portion of the chain corresponds to 23–31; the sequence is LEFVLIHQR. A helical membrane pass occupies residues 32-52; the sequence is WVFVCLFLLPLSLIFDIYYYV. Residues 53-516 are Cytoplasmic-facing; sequence RAWVVFKLSS…YDKICKAARH (464 aa). The FAD-binding PCMH-type domain occupies 58–234; that stretch reads FKLSSAPRLH…VAAEIRIIPA (177 aa). Position 163–175 (163–175) interacts with FAD; it reads TVGGLIMGTGIES.

It belongs to the FAD-binding oxidoreductase/transferase type 4 family. Interacts with DHCR7; this interaction regulates DHCR7 activity. The cofactor is FAD.

Its subcellular location is the endoplasmic reticulum membrane. It is found in the golgi apparatus membrane. It catalyses the reaction cholesterol + NADP(+) = desmosterol + NADPH + H(+). It carries out the reaction lanosterol + NADPH + H(+) = 24,25-dihydrolanosterol + NADP(+). The enzyme catalyses 5alpha-cholest-8-en-3beta-ol + NADP(+) = zymosterol + NADPH + H(+). Its pathway is steroid biosynthesis; cholesterol biosynthesis. Catalyzes the reduction of the delta-24 double bond of sterol intermediates during cholesterol biosynthesis. In addition to its cholesterol-synthesizing activity, can protect cells from oxidative stress by reducing caspase 3 activity during apoptosis induced by oxidative stress. Also protects against amyloid-beta peptide-induced apoptosis. This chain is Delta(24)-sterol reductase (Dhcr24), found in Rattus norvegicus (Rat).